We begin with the raw amino-acid sequence, 80 residues long: uncharacterized protein (80 aa).

This is an uncharacterized protein from Invertebrate iridescent virus 6 (IIV-6).